A 222-amino-acid polypeptide reads, in one-letter code: Flagellar L-ring protein (222 aa).

Positions 1–18 are cleaved as a signal peptide; that stretch reads MKTTRAIAMLGLLLGLAA. A lipid anchor (N-palmitoyl cysteine) is attached at C19. C19 is lipidated: S-diacylglycerol cysteine.

It belongs to the FlgH family. The basal body constitutes a major portion of the flagellar organelle and consists of four rings (L,P,S, and M) mounted on a central rod.

It localises to the cell outer membrane. It is found in the bacterial flagellum basal body. Assembles around the rod to form the L-ring and probably protects the motor/basal body from shearing forces during rotation. The sequence is that of Flagellar L-ring protein from Thiobacillus denitrificans (strain ATCC 25259 / T1).